The chain runs to 392 residues: Neutrophil cytosol factor 1 (392 aa).

The PX domain maps to 4–125; sequence HFIRHIALLG…NFFKVRPDDL (122 aa). SH3 domains lie at 156–215 and 226–285; these read IILQ…PLDS and YAGE…KAGQ. The segment at 290 to 392 is disordered; the sequence is AKSQIKSRGA…STKRKLASAV (103 aa). 2 positions are modified to phosphoserine: S304 and S305. The segment covering 310–319 has biased composition (basic residues); the sequence is HSIHQRSRKR. A phosphoserine mark is found at S321, S329, and S348. Over residues 376–385 the composition is skewed to basic and acidic residues; the sequence is ILHRCSESTK.

Component of the phagocyte NADPH oxidase complex composed of an obligatory core heterodimer formed by the membrane proteins CYBA and CYBB and the cytosolic regulatory subunits NCF1/p47-phox, NCF2/p67-phox, NCF4/p40-phox and the small GTPase RAC1 or RAC2. Part of a cytosolic complex composed at least by NCF1, NCF2 and NCF4. Interacts (via C-terminus) with NCF2 (via the C-terminal SH3 domain). Interacts with NCF4. Interacts with CYBB. Interacts (via the second SH3 domain) with CYBA; interaction is phosphorylation-dependent. Interacts with NOXA1. Interacts with ADAM15. Interacts with TRAF4. Interacts with FASLG. Interacts with PARK7 (via C-terminus); the interaction is enhanced by LPS and modulates NCF1 phosphorylation and membrane translocation. Phosphorylated by PRKCD; phosphorylation induces activation of NCF1, leading to assembly and activation of the NADPH oxidase complex.

It localises to the cytoplasm. The protein resides in the cytosol. The protein localises to the membrane. Subunit of the phagocyte NADPH oxidase complex that mediates the transfer of electrons from cytosolic NADPH to O2 to produce the superoxide anion (O2(-)). In the activated complex, electrons are first transferred from NADPH to flavin adenine dinucleotide (FAD) and subsequently transferred via two heme molecules to molecular oxygen, producing superoxide through an outer-sphere reaction. Activation of the NADPH oxidase complex is initiated by the assembly of cytosolic subunits of the NADPH oxidase complex with the core NADPH oxidase complex to form a complex at the plasma membrane or phagosomal membrane. This activation process is initiated by phosphorylation dependent binding of the cytosolic NCF1/p47-phox subunit to the C-terminus of CYBA/p22-phox. This is Neutrophil cytosol factor 1 from Bos taurus (Bovine).